Here is a 559-residue protein sequence, read N- to C-terminus: Membrane protein insertase YidC (559 aa).

A helical membrane pass occupies residues I7–Q24. 2 stretches are compositionally biased toward low complexity: residues A45 to G55 and Q63 to A82. The disordered stretch occupies residues A45 to A82. 5 consecutive transmembrane segments (helical) span residues L338–L358, F364–F384, L434–L454, L472–Q492, and V507–V527.

The protein belongs to the OXA1/ALB3/YidC family. Type 1 subfamily. Interacts with the Sec translocase complex via SecD. Specifically interacts with transmembrane segments of nascent integral membrane proteins during membrane integration.

The protein resides in the cell inner membrane. Required for the insertion and/or proper folding and/or complex formation of integral membrane proteins into the membrane. Involved in integration of membrane proteins that insert both dependently and independently of the Sec translocase complex, as well as at least some lipoproteins. Aids folding of multispanning membrane proteins. In Cupriavidus taiwanensis (strain DSM 17343 / BCRC 17206 / CCUG 44338 / CIP 107171 / LMG 19424 / R1) (Ralstonia taiwanensis (strain LMG 19424)), this protein is Membrane protein insertase YidC.